The sequence spans 212 residues: Glycerol-3-phosphate acyltransferase (212 aa).

Transmembrane regions (helical) follow at residues 3-23 (ILLA…VIVS), 51-71 (KAAI…VWLA), 78-98 (DVAV…PVFF), 115-135 (AVHP…AFFF), and 139-159 (SLAA…LFGT).

Belongs to the PlsY family. In terms of assembly, probably interacts with PlsX.

The protein localises to the cell inner membrane. The enzyme catalyses an acyl phosphate + sn-glycerol 3-phosphate = a 1-acyl-sn-glycero-3-phosphate + phosphate. It functions in the pathway lipid metabolism; phospholipid metabolism. Its function is as follows. Catalyzes the transfer of an acyl group from acyl-phosphate (acyl-PO(4)) to glycerol-3-phosphate (G3P) to form lysophosphatidic acid (LPA). This enzyme utilizes acyl-phosphate as fatty acyl donor, but not acyl-CoA or acyl-ACP. This chain is Glycerol-3-phosphate acyltransferase, found in Burkholderia vietnamiensis (strain G4 / LMG 22486) (Burkholderia cepacia (strain R1808)).